A 218-amino-acid chain; its full sequence is Small ribosomal subunit protein uS3c (218 aa).

The 82-residue stretch at 39–120 (IRNFMNKELL…IITCKVVGVT (82 aa)) folds into the KH type-2 domain.

Belongs to the universal ribosomal protein uS3 family. As to quaternary structure, part of the 30S ribosomal subunit.

The protein localises to the plastid. It is found in the chloroplast. The protein is Small ribosomal subunit protein uS3c (rps3) of Euglena gracilis.